Consider the following 362-residue polypeptide: Very-long-chain (3R)-3-hydroxyacyl-CoA dehydratase 3 (362 aa).

N-acetylmethionine is present on Met-1. Residues 1-149 (MENQVLTPHV…ETLTSLKKGY (149 aa)) are Cytoplasmic-facing. In terms of domain architecture, CS spans 5-94 (VLTPHVYWAQ…KESQWWERLT (90 aa)). Phosphothreonine is present on Thr-7. A coiled-coil region spans residues 111 to 136 (LDESDAEMELRAKEEEQLNKLRLESQ). A phosphoserine mark is found at Ser-114 and Ser-135. Residues 150–170 (LFMYNLVQFLGFSWIFVNMTV) traverse the membrane as a helical segment. The Lumenal segment spans residues 171-189 (RFFILGKESFYDTFHTVAD). The helical transmembrane segment at 190 to 210 (MMYFCQMLAAVESINAAIGVT) threads the bilayer. Over 211–212 (KS) the chain is Cytoplasmic. Residues 213 to 233 (PVVPSLFQLLGRNFILFIIFG) traverse the membrane as a helical segment. At 234-242 (TMEEMQNKA) the chain is on the lumenal side. Residues 243 to 263 (VVFFVFYIWSTVEIFRYPFYM) traverse the membrane as a helical segment. The Cytoplasmic segment spans residues 264 to 280 (LSCIDMDWKVLTWLRYT). The helical transmembrane segment at 281–301 (VWIPLYPMGCLAEAVSVIQSI) threads the bilayer. Residues Tyr-286 and Glu-293 contribute to the active site. Topologically, residues 302–325 (PVFNETGRFSFTLPYPVKIKVRFS) are lumenal. A helical transmembrane segment spans residues 326-346 (FFLQIYLILLFLGLYVNFRYL). The Cytoplasmic segment spans residues 347 to 362 (YKQRRRRFGQKKKKIH).

It belongs to the very long-chain fatty acids dehydratase HACD family. In terms of assembly, may interact with enzymes of the ELO family (including ELOVL1); with those enzymes that mediate condensation, the first of the four steps of the reaction cycle responsible for fatty acids elongation, may be part of a larger fatty acids elongase complex. Interacts with RAC1. Associates with internalized insulin receptor/INSR complexes on Golgi/endosomal membranes; HACD3/PTPLAD1 together with ATIC and PRKAA2/AMPK2 is proposed to be part of a signaling network regulating INSR autophosphorylation and endocytosis.

Its subcellular location is the endoplasmic reticulum membrane. The catalysed reaction is a very-long-chain (3R)-3-hydroxyacyl-CoA = a very-long-chain (2E)-enoyl-CoA + H2O. It carries out the reaction (3R)-hydroxyhexadecanoyl-CoA = (2E)-hexadecenoyl-CoA + H2O. Its pathway is lipid metabolism; fatty acid biosynthesis. Catalyzes the third of the four reactions of the long-chain fatty acids elongation cycle. This endoplasmic reticulum-bound enzymatic process, allows the addition of two carbons to the chain of long- and very long-chain fatty acids/VLCFAs per cycle. This enzyme catalyzes the dehydration of the 3-hydroxyacyl-CoA intermediate into trans-2,3-enoyl-CoA, within each cycle of fatty acid elongation. Thereby, it participates in the production of VLCFAs of different chain lengths that are involved in multiple biological processes as precursors of membrane lipids and lipid mediators. Involved in Rac1-signaling pathways leading to the modulation of gene expression. Promotes insulin receptor/INSR autophosphorylation and is involved in INSR internalization. This chain is Very-long-chain (3R)-3-hydroxyacyl-CoA dehydratase 3, found in Bos taurus (Bovine).